The primary structure comprises 331 residues: L-lactate dehydrogenase A chain (331 aa).

NAD(+) is bound by residues 29-57 and arginine 98; that span reads GMVG…MEDK. Residues arginine 105, asparagine 137, and arginine 168 each contribute to the substrate site. Asparagine 137 is an NAD(+) binding site. Histidine 192 functions as the Proton acceptor in the catalytic mechanism. Threonine 247 provides a ligand contact to substrate.

Belongs to the LDH/MDH superfamily. LDH family. In terms of assembly, homotetramer.

It localises to the cytoplasm. The catalysed reaction is (S)-lactate + NAD(+) = pyruvate + NADH + H(+). It functions in the pathway fermentation; pyruvate fermentation to lactate; (S)-lactate from pyruvate: step 1/1. Its function is as follows. Interconverts simultaneously and stereospecifically pyruvate and lactate with concomitant interconversion of NADH and NAD(+). The polypeptide is L-lactate dehydrogenase A chain (ldha) (Champsocephalus gunnari (Mackerel icefish)).